The chain runs to 88 residues: Large ribosomal subunit protein bL27 (88 aa).

The interval 1 to 25 (MAHKKGASSSRNGRDSNAQRLGVKR) is disordered. Over residues 7–19 (ASSSRNGRDSNAQ) the composition is skewed to polar residues.

Belongs to the bacterial ribosomal protein bL27 family.

The chain is Large ribosomal subunit protein bL27 from Nocardia farcinica (strain IFM 10152).